Here is a 227-residue protein sequence, read N- to C-terminus: Claudin-15 (227 aa).

A topological domain (cytoplasmic) is located at residue Met-1. Residues 2–24 form a helical membrane-spanning segment; it reads SVAVETFGFFMSALGLLMLGLTL. Residues 25-74 are Extracellular-facing; the sequence is SNSYWRVSTVHGNVITTNTIFENLWYSCATDSLGVSNCWDFPSMLALSGY. Cys-52 and Cys-62 are oxidised to a cystine. The helical transmembrane segment at 75–99 threads the bilayer; the sequence is VQGCRALMITAILLGFLGLFLGMVG. Over 100–115 the chain is Cytoplasmic; that stretch reads LRCTNVGNMDLSKKAK. At Ser-111 the chain carries Phosphoserine. Residues 116-140 form a helical membrane-spanning segment; it reads LLAIAGTLHILAGACGMVAISWYAV. At 141 to 159 the chain is on the extracellular side; it reads NITTDFFNPLYAGTKYELG. The segment at 146 to 147 is important for the formation of tight-junction strand-like structures; it reads FF. Residues 160–182 traverse the membrane as a helical segment; sequence PALYLGWSASLLSILGGICVFST. Over 183–227 the chain is Cytoplasmic; that stretch reads CCCSSKEEPATRAGLPYKPSTVVIPRATSDESDISFGKYGKNAYV. A phosphoserine mark is found at Ser-211, Ser-214, and Ser-217.

Belongs to the claudin family. As to quaternary structure, can form homo- and heteropolymeric tight junction strands. Palmitoylated when heterogeneously expressed in S.frugiperda cells. Detected in duodenum, jejunum and ileum. Detected on intestinal villi and crypts (at protein level). Ubiquitous. Detected in small and large intestine, colon, jejunum, heart, kidney and lung.

It is found in the cell junction. It localises to the tight junction. The protein resides in the cell membrane. The catalysed reaction is Na(+)(in) = Na(+)(out). It catalyses the reaction K(+)(in) = K(+)(out). It carries out the reaction Cs(+)(in) = Cs(+)(out). The enzyme catalyses Rb(+)(in) = Rb(+)(out). The catalysed reaction is Li(+)(in) = Li(+)(out). It catalyses the reaction NH4(+)(in) = NH4(+)(out). It carries out the reaction methylamine(out) = methylamine(in). The enzyme catalyses H2O(in) = H2O(out). Functionally, forms paracellular channels: polymerizes in tight junction strands with cation- and water-selective channels through the strands, conveying epithelial permeability in a process known as paracellular tight junction permeability. In intestinal epithelium, allows for sodium and water fluxes from the peritoneal side to the lumen of the intestine to regulate nutrient absorption and intestinal morphogenesis. This Mus musculus (Mouse) protein is Claudin-15.